A 426-amino-acid polypeptide reads, in one-letter code: Serine hydroxymethyltransferase (426 aa).

(6S)-5,6,7,8-tetrahydrofolate contacts are provided by residues leucine 122 and 126-128 (GHL). The residue at position 231 (lysine 231) is an N6-(pyridoxal phosphate)lysine. Residues glutamate 247 and 355-357 (SPF) each bind (6S)-5,6,7,8-tetrahydrofolate.

It belongs to the SHMT family. As to quaternary structure, homodimer. Pyridoxal 5'-phosphate serves as cofactor.

The protein resides in the cytoplasm. The enzyme catalyses (6R)-5,10-methylene-5,6,7,8-tetrahydrofolate + glycine + H2O = (6S)-5,6,7,8-tetrahydrofolate + L-serine. The protein operates within one-carbon metabolism; tetrahydrofolate interconversion. Its pathway is amino-acid biosynthesis; glycine biosynthesis; glycine from L-serine: step 1/1. Functionally, catalyzes the reversible interconversion of serine and glycine with tetrahydrofolate (THF) serving as the one-carbon carrier. This reaction serves as the major source of one-carbon groups required for the biosynthesis of purines, thymidylate, methionine, and other important biomolecules. Also exhibits THF-independent aldolase activity toward beta-hydroxyamino acids, producing glycine and aldehydes, via a retro-aldol mechanism. This Cyanothece sp. (strain PCC 7425 / ATCC 29141) protein is Serine hydroxymethyltransferase.